A 350-amino-acid polypeptide reads, in one-letter code: ADP-ribosylhydrolase ARH3 (350 aa).

4 residues coordinate Mg(2+): E27, T57, D58, and D59. D58 provides a ligand contact to substrate. Substrate is bound by residues K127–G133, H163, L216, and I252. 3 residues coordinate Mg(2+): D295, D297, and T298.

It belongs to the ADP-ribosylglycohydrolase family. Monomer. It depends on Mg(2+) as a cofactor.

Its subcellular location is the nucleus. The protein resides in the cytoplasm. It is found in the chromosome. The protein localises to the mitochondrion matrix. The enzyme catalyses [(1''-&gt;2')-ADP-alpha-D-ribose](n) + H2O = [(1''-&gt;2')-ADP-alpha-D-ribose](n-1) + ADP-D-ribose. It carries out the reaction 1''-O-acetyl-ADP-alpha-D-ribose + H2O = ADP-D-ribose + acetate + H(+). The catalysed reaction is O-(ADP-D-ribosyl)-L-seryl-[protein] + H2O = ADP-D-ribose + L-seryl-[protein]. It catalyses the reaction alpha-NAD(+) + H2O = ADP-D-ribose + nicotinamide + H(+). With respect to regulation, the protein undergoes a dramatic conformational switch from closed to open states upon substrate-binding, which enables specific substrate recognition for the 1''-O-linkage. The glutamate flap (Glu-27) blocks substrate entrance to Mg(2+) in the unliganded closed state. In presence of substrate, Glu-27 is ejected from the active site: this closed-to-open transition significantly widens the substrate-binding channel and precisely positions the scissile 1''-O-linkage for cleavage while securing tightly 2'- and 3'-hydroxyls of ADP-ribose. Its function is as follows. ADP-ribosylhydrolase that preferentially hydrolyzes the scissile alpha-O-linkage attached to the anomeric C1'' position of ADP-ribose and acts on different substrates, such as proteins ADP-ribosylated on serine and threonine, free poly(ADP-ribose) and O-acetyl-ADP-D-ribose. Specifically acts as a serine mono-ADP-ribosylhydrolase by mediating the removal of mono-ADP-ribose attached to serine residues on proteins, thereby playing a key role in DNA damage response. Serine ADP-ribosylation of proteins constitutes the primary form of ADP-ribosylation of proteins in response to DNA damage. Does not hydrolyze ADP-ribosyl-arginine, -cysteine, -diphthamide, or -asparagine bonds. Also able to degrade protein free poly(ADP-ribose), which is synthesized in response to DNA damage: free poly(ADP-ribose) acts as a potent cell death signal and its degradation by ADPRHL2 protects cells from poly(ADP-ribose)-dependent cell death, a process named parthanatos. Also hydrolyzes free poly(ADP-ribose) in mitochondria. Specifically digests O-acetyl-ADP-D-ribose, a product of deacetylation reactions catalyzed by sirtuins. Specifically degrades 1''-O-acetyl-ADP-D-ribose isomer, rather than 2''-O-acetyl-ADP-D-ribose or 3''-O-acetyl-ADP-D-ribose isomers. The chain is ADP-ribosylhydrolase ARH3 (adprs) from Xenopus tropicalis (Western clawed frog).